Here is a 378-residue protein sequence, read N- to C-terminus: O-methyltransferase gsfD (378 aa).

Residues 219–220 (GG), Asp-244, 266–267 (DM), and Arg-282 contribute to the S-adenosyl-L-methionine site. His-286 serves as the catalytic Proton acceptor.

It belongs to the class I-like SAM-binding methyltransferase superfamily. Cation-independent O-methyltransferase family.

It carries out the reaction desmethyl-dehydrogriseofulvin + S-adenosyl-L-methionine = dehydrogriseofulvin + S-adenosyl-L-homocysteine + H(+). The protein operates within secondary metabolite biosynthesis; terpenoid biosynthesis. Functionally, O-methyltransferase; part of the gene cluster that mediates the biosynthesis of griseofulvin, an important antifungal drug that has been in use for a long time for treating dermatophyte infections. The first step of the pathway is the formation of the heptaketide backbone by gsfA which is initiated by priming with acetyl-CoA, followed by sequential condensations of 6 malonyl-CoA units. The resulting benzophenone can undergo a spontaneous dehydration to form norlichexanthone. However, the true precursor for the griseofulvin biosynthesis is not norlichexanthone, but the heptaketide benzophenone that is O-methylated at 3-OH by gsfB to produce griseophenone D which is further methylated at 9-OH by gsfC to yield griseophenone C. Griseophenone C is then substrate of halogenase gsfI which is responsible for the regio-specific chlorination at the C13 position to form griseophenone B. The cytochrome P450 gsfF catalyzes the coupling of orcinol and phloroglucinol rings in griseophenone B to form desmethyl-dehydrogriseofulvin A which is further methylated at 5-OH by gsfD to yield dehydrogriseofulvin. Finally, gsfE performs stereospecific reduction of enone 18 of dehydrogriseofulvin to afford the final product griseofulvin. This Penicillium aethiopicum protein is O-methyltransferase gsfD.